The following is a 106-amino-acid chain: Integration host factor subunit alpha (106 aa).

Belongs to the bacterial histone-like protein family. As to quaternary structure, heterodimer of an alpha and a beta chain.

This protein is one of the two subunits of integration host factor, a specific DNA-binding protein that functions in genetic recombination as well as in transcriptional and translational control. This Nitrobacter winogradskyi (strain ATCC 25391 / DSM 10237 / CIP 104748 / NCIMB 11846 / Nb-255) protein is Integration host factor subunit alpha.